Consider the following 217-residue polypeptide: Spore coat protein F-like protein YhcQ (217 aa).

The span at 1 to 11 shows a compositional bias: low complexity; sequence MDQFNQQQQSQ. A disordered region spans residues 1-28; it reads MDQFNQQQQSQMNKGIPGKPHKNHGGHE.

This sequence belongs to the CotF family.

It is found in the spore coat. In Bacillus subtilis (strain 168), this protein is Spore coat protein F-like protein YhcQ (yhcQ).